The chain runs to 423 residues: Probable sucrose-phosphatase 1 (423 aa).

This sequence belongs to the sucrose phosphatase family. As to quaternary structure, homodimer. Mg(2+) is required as a cofactor.

The enzyme catalyses sucrose 6(F)-phosphate + H2O = sucrose + phosphate. It participates in glycan biosynthesis; sucrose biosynthesis; sucrose from D-fructose 6-phosphate and UDP-alpha-D-glucose: step 2/2. In terms of biological role, catalyzes the final step of sucrose synthesis. This chain is Probable sucrose-phosphatase 1 (SPP1), found in Arabidopsis thaliana (Mouse-ear cress).